Here is a 536-residue protein sequence, read N- to C-terminus: CTP synthase (536 aa).

Residues 1–268 (MSTKYVFVTG…DNLVCEKLHL (268 aa)) form an amidoligase domain region. Ser-14 contributes to the CTP binding site. Ser-14 serves as a coordination point for UTP. ATP is bound at residue 15–20 (ALGKGI). Tyr-55 serves as a coordination point for L-glutamine. Asp-72 lines the ATP pocket. Residues Asp-72 and Glu-142 each contribute to the Mg(2+) site. CTP contacts are provided by residues 149 to 151 (DIE), 189 to 194 (KTKPTQ), and Lys-225. UTP contacts are provided by residues 189–194 (KTKPTQ) and Lys-225. Residues 293 to 535 (KIALVGKYVE…IKAALEENKS (243 aa)) enclose the Glutamine amidotransferase type-1 domain. Gly-355 serves as a coordination point for L-glutamine. Cys-382 acts as the Nucleophile; for glutamine hydrolysis in catalysis. L-glutamine contacts are provided by residues 383 to 386 (LGMQ), Glu-406, and Arg-463. Active-site residues include His-508 and Glu-510.

It belongs to the CTP synthase family. As to quaternary structure, homotetramer.

The catalysed reaction is UTP + L-glutamine + ATP + H2O = CTP + L-glutamate + ADP + phosphate + 2 H(+). It catalyses the reaction L-glutamine + H2O = L-glutamate + NH4(+). The enzyme catalyses UTP + NH4(+) + ATP = CTP + ADP + phosphate + 2 H(+). The protein operates within pyrimidine metabolism; CTP biosynthesis via de novo pathway; CTP from UDP: step 2/2. Its activity is regulated as follows. Allosterically activated by GTP, when glutamine is the substrate; GTP has no effect on the reaction when ammonia is the substrate. The allosteric effector GTP functions by stabilizing the protein conformation that binds the tetrahedral intermediate(s) formed during glutamine hydrolysis. Inhibited by the product CTP, via allosteric rather than competitive inhibition. Functionally, catalyzes the ATP-dependent amination of UTP to CTP with either L-glutamine or ammonia as the source of nitrogen. Regulates intracellular CTP levels through interactions with the four ribonucleotide triphosphates. This Clostridium beijerinckii (strain ATCC 51743 / NCIMB 8052) (Clostridium acetobutylicum) protein is CTP synthase.